The sequence spans 449 residues: Alpha-L-fucosidase (449 aa).

Residues 1-19 (MGLLLLLSLLSACFQPRYA) form the signal peptide. 4 N-linked (GlcNAc...) asparagine glycosylation sites follow: asparagine 156, asparagine 224, asparagine 362, and asparagine 375.

This sequence belongs to the glycosyl hydrolase 29 family. In terms of assembly, homotetramer.

The protein localises to the secreted. It carries out the reaction an alpha-L-fucoside + H2O = L-fucose + an alcohol. Functionally, alpha-L-fucosidase is responsible for hydrolyzing the alpha-1,6-linked fucose joined to the reducing-end N-acetylglucosamine of the carbohydrate moieties of glycoproteins. This Branchiostoma floridae (Florida lancelet) protein is Alpha-L-fucosidase.